We begin with the raw amino-acid sequence, 563 residues long: Germacrene-A synthase (563 aa).

Residues D316, D320, D461, and E469 each contribute to the Mg(2+) site. The DDXXD motif signature appears at 316-320; the sequence is DDIYD.

This sequence belongs to the terpene synthase family. Tpsa subfamily. It depends on Mg(2+) as a cofactor. Expressed in young leaves. Detected in trichomes and cones.

It carries out the reaction (2E,6E)-farnesyl diphosphate = (+)-(R)-germacrene A + diphosphate. The protein operates within secondary metabolite biosynthesis; terpenoid biosynthesis. In terms of biological role, sesquiterpene synthase that catalyzes the formation of germacrene A. Can use farnesyl diphosphate as substrate, but not geranyl diphosphate or geranylgeranyl diphosphate. Beta-elemene, the initially measured product in the assay, is derived nonenzymatically from germacrene A. The polypeptide is Germacrene-A synthase (Humulus lupulus (European hop)).